Here is a 341-residue protein sequence, read N- to C-terminus: MQVKHLLLIAILALTAACSSNKETVDENLSESQLYQQAQDDLNNKSYNSAVTKLKALESRYPFGRYAEQAQLELIYANYKNMEPEAARAAAERFIRLHPQHPNVDYAYYLKGLSSFDQDRGLLARFLPLDMTKRDPGAARDSFNEFAQLTSRFPNSRYAPDAKARMVYLRNLLAAYEVHVGHYYLKRQAYVAAANRGRYVVENFQETPAVGDGLAIMVEAYRRLGLDDLASTSLETLKLNYPDNASLKDGEFVARESEADTRSWLAKATLGLIEGGEPPPHMETQAAKDVIKQYEDAEREIPAELKPENQDHSADDEKPESDDDEDSGRSWWSYMTFGLFD.

The N-terminal stretch at 1-17 (MQVKHLLLIAILALTAA) is a signal peptide. Residue Cys18 is the site of N-palmitoyl cysteine attachment. Cys18 carries S-diacylglycerol cysteine lipidation. Positions 289–316 (DVIKQYEDAEREIPAELKPENQDHSADD) are enriched in basic and acidic residues. Residues 289–330 (DVIKQYEDAEREIPAELKPENQDHSADDEKPESDDDEDSGRS) form a disordered region. Acidic residues predominate over residues 317–326 (EKPESDDDED).

It belongs to the BamD family. Part of the Bam complex.

It localises to the cell outer membrane. Functionally, part of the outer membrane protein assembly complex, which is involved in assembly and insertion of beta-barrel proteins into the outer membrane. This is Outer membrane protein assembly factor BamD from Pseudomonas aeruginosa (strain ATCC 15692 / DSM 22644 / CIP 104116 / JCM 14847 / LMG 12228 / 1C / PRS 101 / PAO1).